The following is a 429-amino-acid chain: Methylenetetrahydrofolate--tRNA-(uracil-5-)-methyltransferase TrmFO (429 aa).

7 to 12 contacts FAD; that stretch reads GAGLAG.

The protein belongs to the MnmG family. TrmFO subfamily. FAD is required as a cofactor.

It is found in the cytoplasm. The enzyme catalyses uridine(54) in tRNA + (6R)-5,10-methylene-5,6,7,8-tetrahydrofolate + NADH + H(+) = 5-methyluridine(54) in tRNA + (6S)-5,6,7,8-tetrahydrofolate + NAD(+). The catalysed reaction is uridine(54) in tRNA + (6R)-5,10-methylene-5,6,7,8-tetrahydrofolate + NADPH + H(+) = 5-methyluridine(54) in tRNA + (6S)-5,6,7,8-tetrahydrofolate + NADP(+). Catalyzes the folate-dependent formation of 5-methyl-uridine at position 54 (M-5-U54) in all tRNAs. This Thermosipho melanesiensis (strain DSM 12029 / CIP 104789 / BI429) protein is Methylenetetrahydrofolate--tRNA-(uracil-5-)-methyltransferase TrmFO.